Consider the following 524-residue polypeptide: Putative ribose/galactose/methyl galactoside import ATP-binding protein 1 (524 aa).

ABC transporter domains lie at 29 to 270 (LEMR…VGRT) and 280 to 524 (VPIG…TGGH). 61–68 (GENGAGKS) contacts ATP.

This sequence belongs to the ABC transporter superfamily. Carbohydrate importer 2 (CUT2) (TC 3.A.1.2) family.

The protein resides in the cell inner membrane. It catalyses the reaction D-ribose(out) + ATP + H2O = D-ribose(in) + ADP + phosphate + H(+). It carries out the reaction D-galactose(out) + ATP + H2O = D-galactose(in) + ADP + phosphate + H(+). In terms of biological role, part of an ABC transporter complex involved in carbohydrate import. Could be involved in ribose, galactose and/or methyl galactoside import. Responsible for energy coupling to the transport system. The protein is Putative ribose/galactose/methyl galactoside import ATP-binding protein 1 of Rhizobium etli (strain ATCC 51251 / DSM 11541 / JCM 21823 / NBRC 15573 / CFN 42).